A 216-amino-acid chain; its full sequence is Adenylate kinase (216 aa).

Residue 10–15 (GAGKGT) participates in ATP binding. Residues 30 to 59 (STGDMLRAAVAAGTEVGKRAKAVMDAGKLV) are NMP. AMP is bound by residues T31, R36, 57 to 59 (KLV), 85 to 88 (GFPR), and Q92. An LID region spans residues 126–163 (GRYTCANCGAGYHDENLRPKVEGVCDRCGSTHFKRRAD). R127 contributes to the ATP binding site. Residues C130, C133, C150, and C153 each contribute to the Zn(2+) site. AMP contacts are provided by R160 and R172. ATP is bound at residue A200.

It belongs to the adenylate kinase family. In terms of assembly, monomer.

Its subcellular location is the cytoplasm. The enzyme catalyses AMP + ATP = 2 ADP. It participates in purine metabolism; AMP biosynthesis via salvage pathway; AMP from ADP: step 1/1. Functionally, catalyzes the reversible transfer of the terminal phosphate group between ATP and AMP. Plays an important role in cellular energy homeostasis and in adenine nucleotide metabolism. This is Adenylate kinase from Rhizobium rhizogenes (strain K84 / ATCC BAA-868) (Agrobacterium radiobacter).